The sequence spans 357 residues: Heat-inducible transcription repressor HrcA (357 aa).

This sequence belongs to the HrcA family.

In terms of biological role, negative regulator of class I heat shock genes (grpE-dnaK-dnaJ and groELS operons). Prevents heat-shock induction of these operons. The protein is Heat-inducible transcription repressor HrcA of Chlorobium phaeovibrioides (strain DSM 265 / 1930) (Prosthecochloris vibrioformis (strain DSM 265)).